Here is a 170-residue protein sequence, read N- to C-terminus: Small ribosomal subunit protein bS18c (170 aa).

The segment at 1 to 61 (MYTSKQPFLK…RRPRIGPGDR (61 aa)) is disordered. Over residues 13–26 (QPFSKSKQTFNKSK) the composition is skewed to polar residues. Positions 27-55 (QPFRKSKQTFRKFKQPFRKSKQPFRRRPR) are enriched in basic residues.

The protein belongs to the bacterial ribosomal protein bS18 family. Part of the 30S ribosomal subunit.

The protein resides in the plastid. Its subcellular location is the chloroplast. In Hordeum vulgare (Barley), this protein is Small ribosomal subunit protein bS18c.